The primary structure comprises 102 residues: Large ribosomal subunit protein bL21 (102 aa).

Belongs to the bacterial ribosomal protein bL21 family. Part of the 50S ribosomal subunit. Contacts protein L20.

Functionally, this protein binds to 23S rRNA in the presence of protein L20. The polypeptide is Large ribosomal subunit protein bL21 (Saccharopolyspora erythraea (strain ATCC 11635 / DSM 40517 / JCM 4748 / NBRC 13426 / NCIMB 8594 / NRRL 2338)).